The following is a 268-amino-acid chain: Tryptophan synthase alpha chain (268 aa).

Catalysis depends on proton acceptor residues glutamate 49 and aspartate 60.

Belongs to the TrpA family. As to quaternary structure, tetramer of two alpha and two beta chains.

The catalysed reaction is (1S,2R)-1-C-(indol-3-yl)glycerol 3-phosphate + L-serine = D-glyceraldehyde 3-phosphate + L-tryptophan + H2O. It participates in amino-acid biosynthesis; L-tryptophan biosynthesis; L-tryptophan from chorismate: step 5/5. Functionally, the alpha subunit is responsible for the aldol cleavage of indoleglycerol phosphate to indole and glyceraldehyde 3-phosphate. This chain is Tryptophan synthase alpha chain, found in Escherichia coli O81 (strain ED1a).